A 390-amino-acid polypeptide reads, in one-letter code: MTRFLICSFALVLLYPAGIDMYLVGLPRIAADLNASEAQLHIAFSVYLAGMATAMLFAGKVADQSGRKPVAIAGAVIFIIASMLCSRATDGSLFLTGRFIQGIGAGCCYVVAFAILRDTLDDRRRAKVLSLLNGITCIVPVLAPVLGHLIMLKFPWQSLFYTMIAMGIAVCLLSVFILKETRPATCSSTSRPQQNAESLLNRFFLSRLAITTLSVSVILTFVNTSPVLLMEMMGFDRGEYATTMALTAGISMAVSFSTPFALSVFKPRTLMLTSQGLFLAAGIVLSLSSSHAVTLFGLTLICAGFSVGFGVAMSQALGPFSLRAGVASSVLGIAQVCGSSLWIWLAAVIGFNALNMLIGILIGCSMVCILLLMTIQPAAHYEKIHHQSRS.

Helical transmembrane passes span 4–24 (FLIC…MYLV), 42–62 (IAFS…GKVA), 69–89 (PVAI…SRAT), 93–113 (LFLT…VVAF), 131–151 (LLNG…HLIM), 158–178 (SLFY…VFIL), 199–221 (LLNR…ILTF), 245–265 (ALTA…LSVF), 269–289 (TLML…SLSS), 293–313 (VTLF…GVAM), 316–336 (ALGP…IAQV), and 353–375 (ALNM…LMTI).

This sequence belongs to the major facilitator superfamily. DHA1 family. MdtL (TC 2.A.1.2.22) subfamily.

It localises to the cell inner membrane. This is Multidrug resistance protein MdtL from Citrobacter koseri (strain ATCC BAA-895 / CDC 4225-83 / SGSC4696).